Here is a 359-residue protein sequence, read N- to C-terminus: 3-dehydroquinate synthase (359 aa).

NAD(+) contacts are provided by residues 72 to 77, 106 to 110, 130 to 131, Lys143, Lys152, and 170 to 173; these read EGEEHK, GVVGD, TT, and TLTT. 3 residues coordinate Zn(2+): Glu185, His248, and His265.

This sequence belongs to the sugar phosphate cyclases superfamily. Dehydroquinate synthase family. Requires Co(2+) as cofactor. Zn(2+) serves as cofactor. It depends on NAD(+) as a cofactor.

It localises to the cytoplasm. The enzyme catalyses 7-phospho-2-dehydro-3-deoxy-D-arabino-heptonate = 3-dehydroquinate + phosphate. The protein operates within metabolic intermediate biosynthesis; chorismate biosynthesis; chorismate from D-erythrose 4-phosphate and phosphoenolpyruvate: step 2/7. Functionally, catalyzes the conversion of 3-deoxy-D-arabino-heptulosonate 7-phosphate (DAHP) to dehydroquinate (DHQ). In Pelobacter propionicus (strain DSM 2379 / NBRC 103807 / OttBd1), this protein is 3-dehydroquinate synthase.